A 225-amino-acid chain; its full sequence is Nuclear autoantigen Sp-100 (225 aa).

The SAND domain occupies 1 to 25 (SKNWKLSIRCGGYTLKVLMENKLLP). 2 DNA-binding regions (HMG box) span residues 26 to 102 (EPPS…KTYI) and 118 to 186 (PKRP…AAYR). Positions 66–83 (KKCSEMWKTIFAKEKGKF) match the Nuclear localization signal motif. The stretch at 157–224 (NNTAAADKQF…EDEQEEENEE (68 aa)) forms a coiled coil. The disordered stretch occupies residues 185–225 (YRAKGMPNSAKKRAVKAEKSKKKREEEEDEEDEQEEENEEE). Residues 194-206 (AKKRAVKAEKSKK) show a composition bias toward basic residues. The span at 210 to 225 (EEEDEEDEQEEENEEE) shows a compositional bias: acidic residues.

Homodimer. Interacts with members of the HP1 family of nonhistone chromosomal protein, such as CBX5 and CBX3 via the PxVxL motif. Interacts with ETS1; the interaction is direct and modulates ETS1 transcriptional activity. Interacts with the MRN complex which is composed of two heterodimers RAD50/MRE11 associated with a single NBN; recruits the complex to PML-related bodies. Interacts with HIPK2; positively regulates TP53-dependent transcription. Interacts with CASP8AP2; may negatively regulate CASP8AP2 export from the nucleus to the cytoplasm. Sumoylated. Sumoylated with SUMO1. Sumoylation depends on a functional nuclear localization signal but is not necessary for nuclear import or nuclear body targeting. Sumoylation may stabilize the interaction with CBX5. Post-translationally, phosphorylated.

It is found in the nucleus. The protein resides in the PML body. It localises to the nuclear body. Its subcellular location is the cytoplasm. In terms of biological role, together with PML, this tumor suppressor is a major constituent of the PML bodies, a subnuclear organelle involved in a large number of physiological processes including cell growth, differentiation and apoptosis. Functions as a transcriptional coactivator of ETS1 and ETS2. Under certain conditions, it may also act as a corepressor of ETS1 preventing its binding to DNA. Through the regulation of ETS1 it may play a role in angiogenesis, controlling endothelial cell motility and invasion. Through interaction with the MRN complex it may be involved in the regulation of telomeres lengthening. May also regulate TP53-mediated transcription and through CASP8AP2, regulate FAS-mediated apoptosis. May also play a role in infection by viruses through mechanisms that may involve chromatin and/or transcriptional regulation. This Gorilla gorilla gorilla (Western lowland gorilla) protein is Nuclear autoantigen Sp-100 (SP100).